Reading from the N-terminus, the 295-residue chain is NAD kinase (295 aa).

Catalysis depends on D72, which acts as the Proton acceptor. NAD(+) contacts are provided by residues 72–73 (DG), 146–147 (ND), R157, K174, D176, 187–192 (TAYALS), and Q247.

The protein belongs to the NAD kinase family. Requires a divalent metal cation as cofactor.

Its subcellular location is the cytoplasm. It carries out the reaction NAD(+) + ATP = ADP + NADP(+) + H(+). Its function is as follows. Involved in the regulation of the intracellular balance of NAD and NADP, and is a key enzyme in the biosynthesis of NADP. Catalyzes specifically the phosphorylation on 2'-hydroxyl of the adenosine moiety of NAD to yield NADP. The chain is NAD kinase from Azotobacter vinelandii (strain DJ / ATCC BAA-1303).